The sequence spans 720 residues: Ciliated left-right organizer metallopeptidase (720 aa).

An N-terminal signal peptide occupies residues 1–25; that stretch reads MTVSFSMFQIYRLVWLSFMTSMCLS. Topologically, residues 26 to 668 are extracellular; the sequence is ACIHDSVLQE…ALYVSHMLYS (643 aa). His243 is a Zn(2+) binding site. Glu244 is an active-site residue. 2 residues coordinate Zn(2+): His247 and His322. A helical membrane pass occupies residues 669–689; the sequence is YVIGGGCCAVCGAAIIFALFW. The Cytoplasmic segment spans residues 690 to 720; that stretch reads YKLRRQFLRVGSSYPPETSNHERPQIPADLV.

Belongs to the peptidase M8 family. Zn(2+) is required as a cofactor.

The protein localises to the membrane. In terms of biological role, putative metalloprotease playing a role in the process of LR patterning. This is Ciliated left-right organizer metallopeptidase (cirop) from Xenopus laevis (African clawed frog).